The chain runs to 121 residues: Replication protein A 14 kDa subunit (121 aa).

Glycyl lysine isopeptide (Lys-Gly) (interchain with G-Cter in ubiquitin) cross-links involve residues lysine 39 and lysine 88.

The protein belongs to the replication factor A protein 3 family. Component of the canonical replication protein A complex (RPA), a heterotrimer composed of RPA1, RPA2 and RPA3. Also a component of the aRPA, the alternative replication protein A complex, a trimeric complex similar to the replication protein A complex/RPA but where RPA1 and RPA3 are associated with RPA4 instead of RPA2. In terms of processing, ubiquitinated by RFWD3 at stalled replication forks in response to DNA damage: ubiquitination by RFWD3 does not lead to degradation by the proteasome and promotes removal of the RPA complex from stalled replication forks, promoting homologous recombination.

The protein resides in the nucleus. Functionally, as part of the heterotrimeric replication protein A complex (RPA/RP-A), binds and stabilizes single-stranded DNA intermediates, that form during DNA replication or upon DNA stress. It prevents their reannealing and in parallel, recruits and activates different proteins and complexes involved in DNA metabolism. Thereby, it plays an essential role both in DNA replication and the cellular response to DNA damage. In the cellular response to DNA damage, the RPA complex controls DNA repair and DNA damage checkpoint activation. Through recruitment of ATRIP activates the ATR kinase a master regulator of the DNA damage response. It is required for the recruitment of the DNA double-strand break repair factors RAD51 and RAD52 to chromatin, in response to DNA damage. Also recruits to sites of DNA damage proteins like XPA and XPG that are involved in nucleotide excision repair and is required for this mechanism of DNA repair. Also plays a role in base excision repair (BER), probably through interaction with UNG. Also recruits SMARCAL1/HARP, which is involved in replication fork restart, to sites of DNA damage. May also play a role in telomere maintenance. RPA3 has its own single-stranded DNA-binding activity and may be responsible for polarity of the binding of the complex to DNA. The chain is Replication protein A 14 kDa subunit (Rpa3) from Mus musculus (Mouse).